The chain runs to 129 residues: HTH-type transcriptional regulator DdrOP3 (129 aa).

The 55-residue stretch at 7-61 folds into the HTH cro/C1-type domain; that stretch reads LRELRQERGLRLKDIAGAAQISVPYLSDLERGRTNPSLETLQSLASTYGITVHDL. The H-T-H motif DNA-binding region spans 18–37; the sequence is LKDIAGAAQISVPYLSDLER.

Cleaved between Leu-106 and Arg-107 by the IrrE metalloprotease after exposure to radiation. Cleavage inactivates DdrOP3, leading to derepression of the target genes.

In terms of biological role, repressor specific for genes preceded by a radiation/desiccation response motif (RDRM) site, which is present upstream of several radiation-induced genes. This Deinococcus deserti (strain DSM 17065 / CIP 109153 / LMG 22923 / VCD115) protein is HTH-type transcriptional regulator DdrOP3.